Consider the following 108-residue polypeptide: Small ribosomal subunit protein bS6 (108 aa).

The protein belongs to the bacterial ribosomal protein bS6 family.

In terms of biological role, binds together with bS18 to 16S ribosomal RNA. This chain is Small ribosomal subunit protein bS6, found in Dichelobacter nodosus (strain VCS1703A).